We begin with the raw amino-acid sequence, 316 residues long: Probable cell division protein WhiA (316 aa).

Residues 275 to 309 constitute a DNA-binding region (H-T-H motif); the sequence is TLKELGEMVSGGKISKSGINHRLRKIDEIAEKLRA.

The protein belongs to the WhiA family.

Its function is as follows. Involved in cell division and chromosome segregation. This is Probable cell division protein WhiA from Bacillus mycoides (strain KBAB4) (Bacillus weihenstephanensis).